We begin with the raw amino-acid sequence, 137 residues long: MTEECGEIVFWTLRKKFVASSDEMPEHSSQVMYYSLAIGHHVGVIDCLNVAFRCPLTEYEDWLALVEEEQARRKMLGVMTFGEIVIDASHTALLTRAFAPLADDATSVWQARSIQFIHLLDEIVQEPAIYLMARKIA.

It to E.coli HycH.

In terms of biological role, possible component of hydrogenase 4. This chain is Hydrogenase-4 component J, found in Escherichia coli (strain K12).